Here is a 400-residue protein sequence, read N- to C-terminus: Formate-dependent phosphoribosylglycinamide formyltransferase (400 aa).

N(1)-(5-phospho-beta-D-ribosyl)glycinamide is bound by residues 22 to 23 (EL) and Glu-82. ATP contacts are provided by residues Arg-115, Lys-156, 161 to 166 (SSGKGQ), 196 to 199 (EGFI), and Glu-204. Positions 120–309 (RLAAETLGLP…EFALHARAIL (190 aa)) constitute an ATP-grasp domain. 2 residues coordinate Mg(2+): Glu-268 and Glu-280. Residues Asp-287, Lys-361, and 368–369 (RR) each bind N(1)-(5-phospho-beta-D-ribosyl)glycinamide.

This sequence belongs to the PurK/PurT family. Homodimer.

The enzyme catalyses N(1)-(5-phospho-beta-D-ribosyl)glycinamide + formate + ATP = N(2)-formyl-N(1)-(5-phospho-beta-D-ribosyl)glycinamide + ADP + phosphate + H(+). Its pathway is purine metabolism; IMP biosynthesis via de novo pathway; N(2)-formyl-N(1)-(5-phospho-D-ribosyl)glycinamide from N(1)-(5-phospho-D-ribosyl)glycinamide (formate route): step 1/1. Functionally, involved in the de novo purine biosynthesis. Catalyzes the transfer of formate to 5-phospho-ribosyl-glycinamide (GAR), producing 5-phospho-ribosyl-N-formylglycinamide (FGAR). Formate is provided by PurU via hydrolysis of 10-formyl-tetrahydrofolate. The polypeptide is Formate-dependent phosphoribosylglycinamide formyltransferase (Xanthomonas oryzae pv. oryzae (strain KACC10331 / KXO85)).